Reading from the N-terminus, the 512-residue chain is MEFSTKALDWSKAGQNGFLATKTDCLVVGLFEGQNLAGVAKALDVATKGLVGRLVKQGDFEGKRGTQLMLHEVAGVGAARVLLVGLGKEADFSDKAFADAVRTAVRALSSTRAASALWCLAQQAPQQRDVAWAVITTITLVREAGYRLLERHPGLKRANANGKPNGNDKSSLRKVVIAVDTGNARAATQAVVRGTAIANGMELTRDLGNLPSNICTPTYLANTARGIAKRHKLKAEVLGRKQIEALNMGAFLAVTKGSEEPPQFIVLRYDGAGAKQAPVVLVGKGITFDTGGISLKPGEGMDEMKYDMCGAASVLGTIQAVAEMGLKLNVIAVVPTCENMPSGIATKPGDVVTSMSGQTIEILNTDAEGRLILCDALTYVERFKPAAVIDVATLTGACIIALGHINSGLYARSDALADALLQAGRRAMDTAWRMPLDDEYQDQLKSNFADMGNIGGRPAGSVTAACFLSRFTEKYDWAHLDIAGTAWKSGAAKGATGRPVPLLAQFLMDRAA.

Mn(2+) contacts are provided by lysine 284 and aspartate 289. Lysine 296 is a catalytic residue. Mn(2+) is bound by residues aspartate 307, aspartate 366, and glutamate 368. Residue arginine 370 is part of the active site.

This sequence belongs to the peptidase M17 family. Requires Mn(2+) as cofactor.

Its subcellular location is the cytoplasm. The enzyme catalyses Release of an N-terminal amino acid, Xaa-|-Yaa-, in which Xaa is preferably Leu, but may be other amino acids including Pro although not Arg or Lys, and Yaa may be Pro. Amino acid amides and methyl esters are also readily hydrolyzed, but rates on arylamides are exceedingly low.. It catalyses the reaction Release of an N-terminal amino acid, preferentially leucine, but not glutamic or aspartic acids.. In terms of biological role, presumably involved in the processing and regular turnover of intracellular proteins. Catalyzes the removal of unsubstituted N-terminal amino acids from various peptides. The protein is Probable cytosol aminopeptidase of Cupriavidus necator (strain ATCC 17699 / DSM 428 / KCTC 22496 / NCIMB 10442 / H16 / Stanier 337) (Ralstonia eutropha).